Here is a 410-residue protein sequence, read N- to C-terminus: MRIVLAYSGGLDTSVILKLMQEKLGAEVITVTVDVGQKDDFEKIEEKAYKFGAVKHYYIDAKEEFAENYVCKAIKANALYENAYPLSTALARPLIVEKLVEVAKKEGAGIIAHGCTGKGNDQVRFNLGIKALMPEAEILQPVAEWNLTRDWEMEYAKKHGIPVSDKIYSIDENIWGRSIEGGVLEDPSIEPPEEVFEWTVSIEKAPDKPEYVTIGFENGVPVSLNGEKMKLLELILKLNEIAGKHGVGRIDHIEDRSVGIKSREVYEAPAAVTLIKAHQDLEKLTLTKWVIEFKSIVDSKWSWLVYNGLWYEPLRLALEGFIDEAEKAVNGEVTVKLWKGNAIVVGRKSDNALYDVKMATYEKFSTFDQKLAKGFIELFGMQSVLAYNMLHGVHSTSNISEIKEAIKTLE.

ATP is bound at residue 6–14 (AYSGGLDTS). Tyr-84 provides a ligand contact to L-citrulline. Gly-114 contacts ATP. The L-aspartate site is built by Thr-116, Asn-120, and Asp-121. An L-citrulline-binding site is contributed by Asn-120. 5 residues coordinate L-citrulline: Arg-124, Ser-169, Ser-178, Glu-254, and Tyr-266.

The protein belongs to the argininosuccinate synthase family. Type 1 subfamily. Homotetramer.

Its subcellular location is the cytoplasm. The enzyme catalyses L-citrulline + L-aspartate + ATP = 2-(N(omega)-L-arginino)succinate + AMP + diphosphate + H(+). Its pathway is amino-acid biosynthesis; L-arginine biosynthesis; L-arginine from L-ornithine and carbamoyl phosphate: step 2/3. This is Argininosuccinate synthase from Pyrococcus furiosus (strain ATCC 43587 / DSM 3638 / JCM 8422 / Vc1).